Consider the following 142-residue polypeptide: Large ribosomal subunit protein bL19 (142 aa).

Belongs to the bacterial ribosomal protein bL19 family.

In terms of biological role, this protein is located at the 30S-50S ribosomal subunit interface and may play a role in the structure and function of the aminoacyl-tRNA binding site. The sequence is that of Large ribosomal subunit protein bL19 from Rickettsia bellii (strain OSU 85-389).